Consider the following 162-residue polypeptide: Large ribosomal subunit protein uL10 (162 aa).

This sequence belongs to the universal ribosomal protein uL10 family. In terms of assembly, part of the ribosomal stalk of the 50S ribosomal subunit. The N-terminus interacts with L11 and the large rRNA to form the base of the stalk. The C-terminus forms an elongated spine to which L12 dimers bind in a sequential fashion forming a multimeric L10(L12)X complex.

Functionally, forms part of the ribosomal stalk, playing a central role in the interaction of the ribosome with GTP-bound translation factors. This Vibrio parahaemolyticus serotype O3:K6 (strain RIMD 2210633) protein is Large ribosomal subunit protein uL10.